The following is a 725-amino-acid chain: LPS-assembly protein LptD (725 aa).

Residues 1–25 (MSLLSKLHLILYICLLLLPLRFVNA) form the signal peptide.

It belongs to the LptD family. In terms of assembly, component of the lipopolysaccharide transport and assembly complex. Interacts with LptE and LptA.

Its subcellular location is the cell outer membrane. In terms of biological role, together with LptE, is involved in the assembly of lipopolysaccharide (LPS) at the surface of the outer membrane. In Nitrosomonas eutropha (strain DSM 101675 / C91 / Nm57), this protein is LPS-assembly protein LptD.